The primary structure comprises 495 residues: Sorting nexin-4 (495 aa).

Over residues 20–31 (GAGSSAAHQHGG) the composition is skewed to low complexity. The interval 20-51 (GAGSSAAHQHGGQESEQPTHNQAEPEPNYTSM) is disordered. The PX domain occupies 62 to 184 (VLECNVSSPL…TFLESPDWNA (123 aa)). A 1,2-diacyl-sn-glycero-3-phospho-(1D-myo-inositol-3-phosphate) is bound by residues arginine 105, threonine 107, lysine 131, and arginine 150. Over residues 193 to 207 (SVSMSGTSSGESGNA) the composition is skewed to low complexity. The tract at residues 193–219 (SVSMSGTSSGESGNAHYGGGSAGGGST) is disordered. Over residues 208-219 (HYGGGSAGGGST) the composition is skewed to gly residues. Residues 406 to 443 (DHEQSRRERLRKLELRIEELTVEVERAKKTSELFDEEV) are a coiled coil.

This sequence belongs to the sorting nexin family.

The protein localises to the cytoplasm. Its subcellular location is the cytosol. It is found in the preautophagosomal structure membrane. It localises to the endosome membrane. The protein resides in the mitochondrion membrane. The protein localises to the lipid droplet. Its function is as follows. Sorting nexin, involved in the separation or division of vacuoles throughout the entire life cycle of the cells. Involved in retrieval of late-Golgi SNAREs from post-Golgi endosomes to the trans-Golgi network, for cytoplasm to vacuole transport (Cvt), and autophagy of large cargos including mitophagy, pexophagy and glycophagy. Required for invasion of the rice sheath. This chain is Sorting nexin-4 (SNX4), found in Pyricularia oryzae (strain 70-15 / ATCC MYA-4617 / FGSC 8958) (Rice blast fungus).